A 179-amino-acid polypeptide reads, in one-letter code: uncharacterized protein (179 aa).

This is an uncharacterized protein from Encephalitozoon cuniculi (strain GB-M1) (Microsporidian parasite).